The following is a 78-amino-acid chain: MSRICDLTGKRAMVGNNVSHAMNKTKRKFSVNLIKKRFYLPEEDRWITLRVAASTIKTINKNGISAVLKKAQTEGFIK.

This sequence belongs to the bacterial ribosomal protein bL28 family.

This Flavobacterium psychrophilum (strain ATCC 49511 / DSM 21280 / CIP 103535 / JIP02/86) protein is Large ribosomal subunit protein bL28.